The chain runs to 60 residues: Large ribosomal subunit protein bL32 (60 aa).

The protein belongs to the bacterial ribosomal protein bL32 family.

This is Large ribosomal subunit protein bL32 from Hydrogenobaculum sp. (strain Y04AAS1).